Reading from the N-terminus, the 279-residue chain is Putative short-chain type dehydrogenase/reductase MSMEG_6031/MSMEI_5872 (279 aa).

NAD(+) is bound at residue 11-33; that stretch reads FITGAARGQGRSHAVRLAEEGAD. Residue Lys-65 forms an Isoglutamyl lysine isopeptide (Lys-Gln) (interchain with Q-Cter in protein Pup) linkage. Ser-158 is a binding site for substrate. The Proton acceptor role is filled by Tyr-171.

Belongs to the short-chain dehydrogenases/reductases (SDR) family.

The protein is Putative short-chain type dehydrogenase/reductase MSMEG_6031/MSMEI_5872 of Mycolicibacterium smegmatis (strain ATCC 700084 / mc(2)155) (Mycobacterium smegmatis).